The primary structure comprises 579 residues: Putative adenine deaminase OB0751 (579 aa).

Belongs to the metallo-dependent hydrolases superfamily. Adenine deaminase family.

The enzyme catalyses adenine + H2O + H(+) = hypoxanthine + NH4(+). This Oceanobacillus iheyensis (strain DSM 14371 / CIP 107618 / JCM 11309 / KCTC 3954 / HTE831) protein is Putative adenine deaminase OB0751.